A 141-amino-acid chain; its full sequence is Large ribosomal subunit protein uL11 (141 aa).

Belongs to the universal ribosomal protein uL11 family. Part of the ribosomal stalk of the 50S ribosomal subunit. Interacts with L10 and the large rRNA to form the base of the stalk. L10 forms an elongated spine to which L12 dimers bind in a sequential fashion forming a multimeric L10(L12)X complex. Post-translationally, one or more lysine residues are methylated.

In terms of biological role, forms part of the ribosomal stalk which helps the ribosome interact with GTP-bound translation factors. The protein is Large ribosomal subunit protein uL11 of Lactococcus lactis subsp. cremoris (strain MG1363).